We begin with the raw amino-acid sequence, 523 residues long: Ribonuclease Y (523 aa).

The helical transmembrane segment at 28–48 (TYYIVATIIIAVIAVYVDYYI) threads the bilayer. Residues 227-312 (TVYVVNLPND…EMVEKAKKEV (86 aa)) enclose the KH domain. The 94-residue stretch at 353-446 (VLKHSIEVSY…VQAADAISAA (94 aa)) folds into the HD domain.

This sequence belongs to the RNase Y family.

It is found in the cell membrane. Functionally, endoribonuclease that initiates mRNA decay. In Clostridium tetani (strain Massachusetts / E88), this protein is Ribonuclease Y.